Here is a 296-residue protein sequence, read N- to C-terminus: 2-haloacid dehalogenase, configuration-inverting (296 aa).

It belongs to the HAD-like hydrolase superfamily. S-2-haloalkanoic acid dehalogenase family.

The catalysed reaction is an (S)-2-haloacid + H2O = a (2R)-2-hydroxycarboxylate + a halide anion + H(+). It catalyses the reaction an (R)-2-haloacid + H2O = a (2S)-2-hydroxycarboxylate + a halide anion + H(+). Its function is as follows. Dehalogenates both (S)- and (R)-2-haloalkanoic acids to the corresponding (R)- and (S)-hydroxyalkanoic acids, respectively, with inversion of configuration at C-2. Acts on 2-haloalkanoic acids whose carbon chain lengths are five or less. The polypeptide is 2-haloacid dehalogenase, configuration-inverting (dhlC) (Alcaligenes xylosoxydans xylosoxydans (Achromobacter xylosoxidans)).